Here is a 293-residue protein sequence, read N- to C-terminus: MTVAITQTGPALQEFVERHQRLFVLSGAGCSTDSGIPDYRDLQGGWKRPQPVTFQAFMGELSTRQRYWARSLVGWPRFGLARPNATHHALAALEARGQLELLLTQNVDRLHQAAGSQAVIDLHGRLDVVRCMGCEQRMPRTEFQLLLERDNPGWADLEAAQAPDGDADLDNVAFDNFVVPACPACGGVLKPDVVFFGENVPRERVERAFAHLQAADAVLVVGSSLMVYSGFRFVQAAARAGLPIAALNFGRTRADDLLSLKVEQSCAQALAFLQQPPDPLHTATARYHSARSA.

One can recognise a Deacetylase sirtuin-type domain in the interval 1–284 (MTVAITQTGP…QPPDPLHTAT (284 aa)). NAD(+) contacts are provided by residues 27–47 (GAGC…GGWK) and 105–108 (QNVD). His-123 serves as the catalytic Proton acceptor. Zn(2+) contacts are provided by Cys-131, Cys-134, Cys-182, and Cys-185. NAD(+)-binding positions include 222 to 224 (GSS), 248 to 250 (NFG), and Cys-266.

It belongs to the sirtuin family. Class II subfamily. It depends on Zn(2+) as a cofactor.

The protein resides in the cytoplasm. It carries out the reaction N(6)-acetyl-L-lysyl-[protein] + NAD(+) + H2O = 2''-O-acetyl-ADP-D-ribose + nicotinamide + L-lysyl-[protein]. Its function is as follows. NAD-dependent protein deacetylase which modulates the activities of several enzymes which are inactive in their acetylated form. The sequence is that of NAD-dependent protein deacetylase from Xanthomonas campestris pv. campestris (strain 8004).